The following is a 624-amino-acid chain: Chaperone protein HtpG (624 aa).

The a; substrate-binding stretch occupies residues 1 to 336; that stretch reads MKGQETRGFQ…SSDLPLNVSR (336 aa). A b region spans residues 337–552; sequence EILQDSTVTR…ADEMSTQMAK (216 aa). A c region spans residues 553–624; it reads LFAAAGQKVP…IRRMNQLLVS (72 aa).

The protein belongs to the heat shock protein 90 family. As to quaternary structure, homodimer.

It localises to the cytoplasm. In terms of biological role, molecular chaperone. Has ATPase activity. In Shigella boydii serotype 4 (strain Sb227), this protein is Chaperone protein HtpG.